The primary structure comprises 286 residues: ATP synthase gamma chain (286 aa).

This sequence belongs to the ATPase gamma chain family. F-type ATPases have 2 components, CF(1) - the catalytic core - and CF(0) - the membrane proton channel. CF(1) has five subunits: alpha(3), beta(3), gamma(1), delta(1), epsilon(1). CF(0) has three main subunits: a, b and c.

The protein resides in the cell inner membrane. Produces ATP from ADP in the presence of a proton gradient across the membrane. The gamma chain is believed to be important in regulating ATPase activity and the flow of protons through the CF(0) complex. The sequence is that of ATP synthase gamma chain from Pseudomonas putida (strain ATCC 700007 / DSM 6899 / JCM 31910 / BCRC 17059 / LMG 24140 / F1).